The primary structure comprises 192 residues: Ribosome maturation factor RimM (192 aa).

The PRC barrel domain maps to E115–L189.

The protein belongs to the RimM family. In terms of assembly, binds ribosomal protein uS19.

The protein resides in the cytoplasm. In terms of biological role, an accessory protein needed during the final step in the assembly of 30S ribosomal subunit, possibly for assembly of the head region. Essential for efficient processing of 16S rRNA. May be needed both before and after RbfA during the maturation of 16S rRNA. It has affinity for free ribosomal 30S subunits but not for 70S ribosomes. This chain is Ribosome maturation factor RimM, found in Acaryochloris marina (strain MBIC 11017).